A 126-amino-acid chain; its full sequence is Apolipoprotein C-IV (126 aa).

A signal peptide spans 1 to 27 (MSLLRHRLQALPSLCLCVLVLACIGAC).

This sequence belongs to the apolipoprotein C4 family.

It localises to the secreted. Functionally, may participate in lipoprotein metabolism. This chain is Apolipoprotein C-IV (APOC4), found in Aotus nancymaae (Ma's night monkey).